We begin with the raw amino-acid sequence, 473 residues long: ATP synthase subunit beta 2 (473 aa).

Residue 158–165 (GGAGVGKT) participates in ATP binding.

Belongs to the ATPase alpha/beta chains family. F-type ATPases have 2 components, CF(1) - the catalytic core - and CF(0) - the membrane proton channel. CF(1) has five subunits: alpha(3), beta(3), gamma(1), delta(1), epsilon(1). CF(0) has three main subunits: a(1), b(2) and c(9-12). The alpha and beta chains form an alternating ring which encloses part of the gamma chain. CF(1) is attached to CF(0) by a central stalk formed by the gamma and epsilon chains, while a peripheral stalk is formed by the delta and b chains.

The protein localises to the cell membrane. The enzyme catalyses ATP + H2O + 4 H(+)(in) = ADP + phosphate + 5 H(+)(out). Its function is as follows. Produces ATP from ADP in the presence of a proton gradient across the membrane. The catalytic sites are hosted primarily by the beta subunits. This is ATP synthase subunit beta 2 from Listeria monocytogenes serotype 4b (strain F2365).